The chain runs to 396 residues: Tryptophan synthase beta chain 1 (396 aa).

Position 86 is an N6-(pyridoxal phosphate)lysine (Lys86).

Belongs to the TrpB family. In terms of assembly, tetramer of two alpha and two beta chains. Pyridoxal 5'-phosphate is required as a cofactor.

The catalysed reaction is (1S,2R)-1-C-(indol-3-yl)glycerol 3-phosphate + L-serine = D-glyceraldehyde 3-phosphate + L-tryptophan + H2O. The protein operates within amino-acid biosynthesis; L-tryptophan biosynthesis; L-tryptophan from chorismate: step 5/5. Its function is as follows. The beta subunit is responsible for the synthesis of L-tryptophan from indole and L-serine. In Vibrio parahaemolyticus serotype O3:K6 (strain RIMD 2210633), this protein is Tryptophan synthase beta chain 1 (trpB1).